The sequence spans 500 residues: Probable betaine aldehyde dehydrogenase (500 aa).

249-254 lines the NAD(+) pocket; sequence GSLATG. Catalysis depends on E271, which acts as the Proton acceptor. The active-site Nucleophile is the C305.

Belongs to the aldehyde dehydrogenase family.

The enzyme catalyses betaine aldehyde + NAD(+) + H2O = glycine betaine + NADH + 2 H(+). It functions in the pathway amine and polyamine biosynthesis; betaine biosynthesis via choline pathway; betaine from betaine aldehyde: step 1/1. This Schizosaccharomyces pombe (strain 972 / ATCC 24843) (Fission yeast) protein is Probable betaine aldehyde dehydrogenase (meu8).